Here is a 418-residue protein sequence, read N- to C-terminus: Nucleoside permease NupG (418 aa).

Topologically, residues 1–4 are cytoplasmic; the sequence is MNLK. Residues 5 to 29 form a helical membrane-spanning segment; sequence LQLKILSFLQFCLWGSWLTTLGSYM. Residues 30 to 36 lie on the Periplasmic side of the membrane; sequence FVTLKFD. The helical transmembrane segment at 37-58 threads the bilayer; the sequence is GASIGAVYSSLGIAAVFMPALL. The Cytoplasmic segment spans residues 59-67; it reads GIVADKWLS. The chain crosses the membrane as a helical span at residues 68 to 88; it reads AKWVYAICHTIGAITLFMAAQ. Residues 89–91 lie on the Periplasmic side of the membrane; sequence VTT. A helical membrane pass occupies residues 92-113; it reads PEAMFLVILINSFAYMPTLGLI. The Cytoplasmic portion of the chain corresponds to 114-135; sequence NTISYYRLQNAGMDIVTDFPPI. A helical transmembrane segment spans residues 136-156; the sequence is RIWGTIGFIMAMWVVSLSGFE. Residues 157–158 lie on the Periplasmic side of the membrane; it reads LS. A helical transmembrane segment spans residues 159–178; the sequence is HMQLYIGAALSAILVLFTLT. The Cytoplasmic segment spans residues 179 to 209; that stretch reads LPHIPVAKQQANQSWTTLLGLDAFALFKNKR. A helical membrane pass occupies residues 210 to 236; sequence MAIFFIFSMLLGAELQITNMFGNTFLH. At 237-247 the chain is on the periplasmic side; sequence SFDKDPMFASS. Residues 248–268 form a helical membrane-spanning segment; the sequence is FIVQHASIIMSISQISETLFI. Topologically, residues 269 to 280 are cytoplasmic; that stretch reads LTIPFFLSRYGI. The chain crosses the membrane as a helical span at residues 281–300; sequence KNVMMISIVAWILRFALFAY. Topologically, residues 301–305 are periplasmic; it reads GDPTP. A helical membrane pass occupies residues 306 to 326; it reads FGTVLLVLSMIVYGCAFDFFN. Over 327–346 the chain is Cytoplasmic; the sequence is ISGSVFVEKEVSPAIRASAQ. A helical membrane pass occupies residues 347-369; sequence GMFLMMTNGFGCILGGIVSGKVV. Over 370–379 the chain is Periplasmic; sequence EMYTQNGITD. The helical transmembrane segment at 380–403 threads the bilayer; it reads WQTVWLIFAGYSVVLAFAFMAMFK. The Cytoplasmic segment spans residues 404 to 418; the sequence is YKHVRVPTGTQTVSH.

The protein belongs to the major facilitator superfamily. Nucleoside:H(+) symporter (NHS) (TC 2.A.1.10) family.

It is found in the cell inner membrane. The catalysed reaction is adenosine(in) + H(+)(in) = adenosine(out) + H(+)(out). The enzyme catalyses uridine(in) + H(+)(in) = uridine(out) + H(+)(out). It carries out the reaction thymidine(in) + H(+)(in) = thymidine(out) + H(+)(out). It catalyses the reaction cytidine(in) + H(+)(in) = cytidine(out) + H(+)(out). The catalysed reaction is 2'-deoxycytidine(in) + H(+)(in) = 2'-deoxycytidine(out) + H(+)(out). The enzyme catalyses guanosine(in) + H(+)(in) = guanosine(out) + H(+)(out). It carries out the reaction inosine(in) + H(+)(in) = inosine(out) + H(+)(out). With respect to regulation, inhibited by the protonophore uncouplers 2,4-dinitrophenol and carbonyl cyanide m-chlorophenylhydrazone (CCCP), and by valinomycin. Inhibited by the nucleoside antibiotic showdomycin. Its function is as follows. Broad-specificity transporter of purine and pyrimidine nucleosides. Can transport adenosine, uridine, thymidine, cytidine, deoxycytidine, guanosine and inosine. Can also transport xanthosine, but with a very low affinity. Transport is driven by a proton motive force. This is Nucleoside permease NupG from Escherichia coli (strain K12).